A 234-amino-acid chain; its full sequence is Putative methyltransferase-like protein 15P1 (234 aa).

Residues 100-102, D119, F146, D169, and Q176 each bind S-adenosyl-L-methionine; that span reads GGH.

This sequence belongs to the methyltransferase superfamily. RsmH family.

Its function is as follows. Probable S-adenosyl-L-methionine-dependent methyltransferase. This is Putative methyltransferase-like protein 15P1 (METTL15P1) from Homo sapiens (Human).